The sequence spans 239 residues: Bidirectional sugar transporter SWEET8 (239 aa).

Residues 1–6 (MVDAKQ) are Extracellular-facing. Residues 7–27 (VRFIIGVIGNVISFGLFAAPA) traverse the membrane as a helical segment. The 90-residue stretch at 9 to 98 (FIIGVIGNVI…VYLMYCGHKK (90 aa)) folds into the MtN3/slv 1 domain. The Cytoplasmic portion of the chain corresponds to 28 to 44 (KTFWRIFKKKSVEEFSY). Residues 45 to 65 (VPYVATVMNCMLWVFYGLPVV) form a helical membrane-spanning segment. Residues 66–69 (HKDS) are Extracellular-facing. A helical transmembrane segment spans residues 70–90 (ILVSTINGVGLVIELFYVGVY). Residues 91 to 103 (LMYCGHKKNHRRN) are Cytoplasmic-facing. The helical transmembrane segment at 104 to 124 (ILGFLALEVILVVAIILITLF) threads the bilayer. Over 125 to 135 (ALKGDFVKQTF) the chain is Extracellular. In terms of domain architecture, MtN3/slv 2 spans 134–185 (TFVGVICDVFNIAMYGAPSLAIIKVVKTKSVEYMPFLLSLVCFVNAGIWTTY). A helical transmembrane segment spans residues 136-156 (VGVICDVFNIAMYGAPSLAII). The Cytoplasmic segment spans residues 157–168 (KVVKTKSVEYMP). Residues 169-189 (FLLSLVCFVNAGIWTTYSLIF) traverse the membrane as a helical segment. Residues 190 to 194 (KIDYY) are Extracellular-facing. The helical transmembrane segment at 195–215 (VLASNGIGTFLALSQLIVYFM) threads the bilayer. The Cytoplasmic segment spans residues 216 to 239 (YYKSTPKEKTVKPSEVEISATERV).

It belongs to the SWEET sugar transporter family. Forms homooligomers and heterooligomers with SWEET4, SWEET5, SWEET6, SWEET7, SWEET9, SWEET10, SWEET11, SWEET13, SWEET15, SWEET16 and SWEET17. Expressed in inflorescences, embryo sacs and pollen, and at a lower level in stems. Barely detected in roots, leaves and seedlings.

It localises to the cell membrane. In terms of biological role, mediates both low-affinity uptake and efflux of sugar across the plasma membrane. Required, in pollen, for microspore cell integrity and primexine pattern formation. This Arabidopsis thaliana (Mouse-ear cress) protein is Bidirectional sugar transporter SWEET8.